Reading from the N-terminus, the 524-residue chain is Serine/threonine-protein phosphatase 2A 56 kDa regulatory subunit gamma isoform (524 aa).

Position 1 is an N-acetylmethionine (methionine 1). Residues 472 to 489 carry the Nuclear localization signal motif; the sequence is RKTVSDEARQAQKDPKKE. The tract at residues 476-524 is disordered; it reads SDEARQAQKDPKKERPLARRKSELPQDPHTKKALEAHCRADELVPQDGR.

This sequence belongs to the phosphatase 2A regulatory subunit B56 family. As to quaternary structure, PP2A consists of a common heterodimeric core enzyme, composed of PPP2CA a 36 kDa catalytic subunit (subunit C) and PPP2R1A a 65 kDa constant regulatory subunit (PR65 or subunit A), that associates with a variety of regulatory subunits. Proteins that associate with the core dimer include three families of regulatory subunits B (the R2/B/PR55/B55, R3/B''/PR72/PR130/PR59 and R5/B'/B56 families), the 48 kDa variable regulatory subunit, viral proteins, and cell signaling molecules. Interacts with SGO1. Interacts with SGO1; the interaction is direct. May interact with TP53. Interacts with IER3 and/or ERK kinases; regulates ERK dephosphorylation Interacts with CIP2A; this interaction stabilizes CIP2A. As to expression, highly expressed in testis, heart and spleen. Also found in brain and skeletal muscle.

The protein localises to the nucleus. It is found in the chromosome. It localises to the centromere. Functionally, the B regulatory subunit might modulate substrate selectivity and catalytic activity, and might also direct the localization of the catalytic enzyme to a particular subcellular compartment. The PP2A-PPP2R5C holoenzyme may activate TP53 and play a role in DNA damage-induced inhibition of cell proliferation. PP2A-PPP2R5C may also regulate the ERK signaling pathway through ERK dephosphorylation. In Oryctolagus cuniculus (Rabbit), this protein is Serine/threonine-protein phosphatase 2A 56 kDa regulatory subunit gamma isoform (PPP2R5C).